The sequence spans 558 residues: Germacrene A synthase short form (558 aa).

Residues aspartate 311, aspartate 315, aspartate 455, threonine 459, and glutamate 463 each contribute to the Mg(2+) site. A DDXXD motif motif is present at residues 311–315 (DDTYD).

The protein belongs to the terpene synthase family. The cofactor is Mg(2+). As to expression, expressed in roots and in green and etiolated seedlings.

The enzyme catalyses (2E,6E)-farnesyl diphosphate = (+)-(R)-germacrene A + diphosphate. Its pathway is secondary metabolite biosynthesis; terpenoid biosynthesis. Functionally, involved in sesquiterpene lactone biosynthesis. Produces exclusively (+)-germacrene A. In Cichorium intybus (Chicory), this protein is Germacrene A synthase short form.